The following is a 618-amino-acid chain: DNA mismatch repair protein MutL (618 aa).

A disordered region spans residues 367–402 (EPTTAREPATPRYSGGASGGNGGRQTAGGWPHAQPG). Residues 382-392 (GASGGNGGRQT) show a composition bias toward gly residues.

This sequence belongs to the DNA mismatch repair MutL/HexB family.

Its function is as follows. This protein is involved in the repair of mismatches in DNA. It is required for dam-dependent methyl-directed DNA mismatch repair. May act as a 'molecular matchmaker', a protein that promotes the formation of a stable complex between two or more DNA-binding proteins in an ATP-dependent manner without itself being part of a final effector complex. This chain is DNA mismatch repair protein MutL, found in Salmonella paratyphi A (strain ATCC 9150 / SARB42).